Reading from the N-terminus, the 156-residue chain is Ribonuclease pancreatic (156 aa).

The first 28 residues, 1–28 (MALEKSLVLLPLLVLILLVLGWVQPSLG), serve as a signal peptide directing secretion. K35 and R38 together coordinate substrate. H40 acts as the Proton acceptor in catalysis. N50 and N62 each carry an N-linked (GlcNAc...) asparagine glycan. Cystine bridges form between C54–C112, C68–C123, C86–C138, and C93–C100. Substrate contacts are provided by residues 69–73 (KPVNT) and K94. The N-linked (GlcNAc...) asparagine glycan is linked to N104. R113 contacts substrate. H147 serves as the catalytic Proton donor.

This sequence belongs to the pancreatic ribonuclease family. In terms of assembly, monomer. Interacts with and forms tight 1:1 complexes with RNH1. Dimerization of two such complexes may occur. Interaction with RNH1 inhibits this protein. Pancreas and other tissues and body fluids (indicating it may have other physiological functions besides its role in digestion).

It localises to the secreted. It catalyses the reaction an [RNA] containing cytidine + H2O = an [RNA]-3'-cytidine-3'-phosphate + a 5'-hydroxy-ribonucleotide-3'-[RNA].. The catalysed reaction is an [RNA] containing uridine + H2O = an [RNA]-3'-uridine-3'-phosphate + a 5'-hydroxy-ribonucleotide-3'-[RNA].. Its function is as follows. Endonuclease that catalyzes the cleavage of RNA on the 3' side of pyrimidine nucleotides. Acts on single-stranded and double-stranded RNA. The chain is Ribonuclease pancreatic (RNASE1) from Pongo pygmaeus (Bornean orangutan).